Here is a 297-residue protein sequence, read N- to C-terminus: uncharacterized protein (297 aa).

Residues 136 to 174 (FSETNDDSTDEEIDTPINDDDDDDKNNDADNNDINEDNK) form a disordered region. The span at 139–170 (TNDDSTDEEIDTPINDDDDDDKNNDADNNDIN) shows a compositional bias: acidic residues.

This sequence to S.pombe SpBC725.03.

This is an uncharacterized protein from Saccharomyces cerevisiae (strain ATCC 204508 / S288c) (Baker's yeast).